The following is a 427-amino-acid chain: Imidazolonepropionase (427 aa).

Fe(3+) is bound by residues histidine 81 and histidine 83. Residues histidine 81 and histidine 83 each coordinate Zn(2+). Arginine 90, tyrosine 153, and histidine 186 together coordinate 4-imidazolone-5-propanoate. Tyrosine 153 lines the N-formimidoyl-L-glutamate pocket. Position 260 (histidine 260) interacts with Fe(3+). Histidine 260 contributes to the Zn(2+) binding site. A 4-imidazolone-5-propanoate-binding site is contributed by glutamate 263. Aspartate 335 is a binding site for Fe(3+). Aspartate 335 contributes to the Zn(2+) binding site. Asparagine 337 and glycine 339 together coordinate N-formimidoyl-L-glutamate. Residue serine 340 coordinates 4-imidazolone-5-propanoate.

It belongs to the metallo-dependent hydrolases superfamily. HutI family. The cofactor is Zn(2+). Requires Fe(3+) as cofactor.

The protein resides in the cytoplasm. It catalyses the reaction 4-imidazolone-5-propanoate + H2O = N-formimidoyl-L-glutamate. It functions in the pathway amino-acid degradation; L-histidine degradation into L-glutamate; N-formimidoyl-L-glutamate from L-histidine: step 3/3. Functionally, catalyzes the hydrolytic cleavage of the carbon-nitrogen bond in imidazolone-5-propanoate to yield N-formimidoyl-L-glutamate. It is the third step in the universal histidine degradation pathway. This chain is Imidazolonepropionase, found in Chloroflexus aggregans (strain MD-66 / DSM 9485).